The primary structure comprises 345 residues: Methionine import ATP-binding protein MetN (345 aa).

The region spanning 2–241 (IKLKNISKVF…PKTLLAQEFI (240 aa)) is the ABC transporter domain. 38–45 (GASGAGKS) lines the ATP pocket.

Belongs to the ABC transporter superfamily. Methionine importer (TC 3.A.1.24) family. The complex is composed of two ATP-binding proteins (MetN), two transmembrane proteins (MetI) and a solute-binding protein (MetQ).

The protein localises to the cell inner membrane. The enzyme catalyses L-methionine(out) + ATP + H2O = L-methionine(in) + ADP + phosphate + H(+). It catalyses the reaction D-methionine(out) + ATP + H2O = D-methionine(in) + ADP + phosphate + H(+). Its function is as follows. Part of the ABC transporter complex MetNIQ involved in methionine import. Responsible for energy coupling to the transport system. This is Methionine import ATP-binding protein MetN from Histophilus somni (strain 129Pt) (Haemophilus somnus).